The sequence spans 60 residues: Temporin-MT5 (60 aa).

A signal peptide spans 1–22; that stretch reads MFTLKKPLLLLFFLATINLSLC. Residues 23–44 constitute a propeptide, removed in mature form; it reads EQERNAEEERRDEPDERNAEVE. At F58 the chain carries Phenylalanine amide.

This sequence belongs to the frog skin active peptide (FSAP) family. Temporin subfamily. Expressed by the skin glands.

Its subcellular location is the secreted. Functionally, antimicrobial peptide. In Amolops mantzorum (Sichuan torrent frog), this protein is Temporin-MT5.